Here is a 301-residue protein sequence, read N- to C-terminus: Glycine--tRNA ligase alpha subunit (301 aa).

Belongs to the class-II aminoacyl-tRNA synthetase family. In terms of assembly, tetramer of two alpha and two beta subunits.

The protein resides in the cytoplasm. It catalyses the reaction tRNA(Gly) + glycine + ATP = glycyl-tRNA(Gly) + AMP + diphosphate. The protein is Glycine--tRNA ligase alpha subunit of Shewanella oneidensis (strain ATCC 700550 / JCM 31522 / CIP 106686 / LMG 19005 / NCIMB 14063 / MR-1).